The primary structure comprises 345 residues: NADH-quinone oxidoreductase subunit H (345 aa).

The Lumenal portion of the chain corresponds to 1–15; the sequence is MADFWATSLGQTLIL. The chain crosses the membrane as a helical span at residues 16–35; sequence LAQGLGIIAFVMIGLLLLVW. Residues 36–86 are Cytoplasmic-facing; that stretch reads GDRKIWAAVQMRKGPNVVGAFGLLQSVADAAKYVFKEIVVPAGVDKPVYFL. Residues 87–106 form a helical membrane-spanning segment; sequence APMLSLVLALLAWVVVPFNE. Residues 107-110 are Lumenal-facing; the sequence is GWVM. A helical membrane pass occupies residues 111–130; it reads ADINVAVLFVFAVSSLEVYG. Residues 131–156 are Cytoplasmic-facing; it reads VIMGGWASNSKYPFLGSLRSAAQMIS. A helical transmembrane segment spans residues 157-176; it reads YEVSMGLIIVGVIISTGSMN. At 177–191 the chain is on the lumenal side; it reads LSAIVEAQRGDFGLL. The helical transmembrane segment at 192–211 threads the bilayer; the sequence is NWYWLPHLPMVALFFISALA. Topologically, residues 212 to 245 are cytoplasmic; it reads ETNRPPFDLPEAESELVAGFMVEYSSTPYLLFMA. Residues 246-265 form a helical membrane-spanning segment; sequence GEYIAVWLMCALTSVLFFGG. Residues 266–276 are Lumenal-facing; sequence WLSPIPGVPDG. The helical transmembrane segment at 277–296 threads the bilayer; it reads VLWMVAKMAAVFFVFAMVKA. Over 297 to 313 the chain is Cytoplasmic; sequence IVPRYRYDQLMRIGWKV. A helical transmembrane segment spans residues 314-333; that stretch reads FLPLSLAWVVVVAFLAKFEV. At 334–345 the chain is on the lumenal side; that stretch reads LGGFWARWSIGA.

It belongs to the complex I subunit 1 family. NDH-1 is composed of 14 different subunits. Subunits NuoA, H, J, K, L, M, N constitute the membrane sector of the complex.

It is found in the cellular chromatophore membrane. It catalyses the reaction a quinone + NADH + 5 H(+)(in) = a quinol + NAD(+) + 4 H(+)(out). Its function is as follows. NDH-1 shuttles electrons from NADH, via FMN and iron-sulfur (Fe-S) centers, to quinones in the respiratory chain. The immediate electron acceptor for the enzyme in this species is believed to be ubiquinone. Couples the redox reaction to proton translocation (for every two electrons transferred, four hydrogen ions are translocated across the cytoplasmic membrane), and thus conserves the redox energy in a proton gradient. This subunit may bind ubiquinone. The polypeptide is NADH-quinone oxidoreductase subunit H (Rhodobacter capsulatus (Rhodopseudomonas capsulata)).